The primary structure comprises 572 residues: Probable lysosomal cobalamin transporter (572 aa).

9 consecutive transmembrane segments (helical) span residues V8–I28, F40–P60, I95–A115, T145–M165, A188–T208, G314–V334, I374–V394, A421–G441, and V499–A519. Residues G522–R544 are disordered.

This sequence belongs to the LIMR family. LMBRD1 subfamily.

Its subcellular location is the lysosome membrane. Its function is as follows. Probable lysosomal cobalamin transporter. Required to export cobalamin from lysosomes allowing its conversion to cofactors. The chain is Probable lysosomal cobalamin transporter from Aspergillus fumigatus (strain ATCC MYA-4609 / CBS 101355 / FGSC A1100 / Af293) (Neosartorya fumigata).